We begin with the raw amino-acid sequence, 200 residues long: High frequency lysogenization protein HflD homolog (200 aa).

The protein belongs to the HflD family.

The protein localises to the cytoplasm. Its subcellular location is the cell inner membrane. This Pseudoalteromonas translucida (strain TAC 125) protein is High frequency lysogenization protein HflD homolog.